A 462-amino-acid polypeptide reads, in one-letter code: Squalene synthase LSS (462 aa).

Residues Arg48 and Arg73 each coordinate NADP(+). Mg(2+) contacts are provided by Asp76, Glu79, and Asp80. Residues Arg214, Lys314, and Arg316 each contribute to the NADP(+) site. 2 helical membrane-spanning segments follow: residues 399-419 and 436-456; these read LVLVLGLGYCVYAFNLLPLLW and LGLPHQIIAVFCVLTAGYQVF.

It belongs to the phytoene/squalene synthase family. It depends on Mg(2+) as a cofactor.

The protein localises to the membrane. The catalysed reaction is 2 (2E,6E)-farnesyl diphosphate + NADH + H(+) = squalene + 2 diphosphate + NAD(+). It carries out the reaction 2 (2E,6E)-farnesyl diphosphate + NADPH + H(+) = squalene + 2 diphosphate + NADP(+). Its function is as follows. Converts farnesyl diphosphate (FPP) into squalene, a precursor for sterol biosynthesis in eukaryotes. This chain is Squalene synthase LSS, found in Botryococcus braunii (Green alga).